A 4074-amino-acid chain; its full sequence is Fibrocystin (4074 aa).

An N-terminal signal peptide occupies residues 1–22; sequence MIVWLISLMSIEILLLAGPALS. N-linked (GlcNAc...) asparagine glycans are attached at residues asparagine 54 and asparagine 224. The IPT/TIG 1 domain maps to 258-310; it reads EILSVFPETGSLGGKTDIIITGDFFDNPALVTIAGVPCDIRHMSPRKIECTTR. The PA14 domain occupies 323 to 483; sequence AGNRGLLFEV…TWLNPDVVST (161 aa). N-linked (GlcNAc...) asparagine glycosylation is found at asparagine 355, asparagine 385, asparagine 518, asparagine 527, asparagine 640, asparagine 710, asparagine 741, asparagine 822, asparagine 829, asparagine 868, asparagine 953, asparagine 966, asparagine 976, asparagine 1006, asparagine 1059, asparagine 1083, asparagine 1115, asparagine 1134, asparagine 1233, asparagine 1240, asparagine 1274, asparagine 1284, asparagine 1308, asparagine 1319, asparagine 1342, asparagine 1373, asparagine 1445, asparagine 1456, asparagine 1471, asparagine 1490, asparagine 1528, asparagine 1560, asparagine 1578, asparagine 1598, asparagine 1627, asparagine 1694, asparagine 1760, asparagine 1775, asparagine 1789, asparagine 1875, asparagine 1915, asparagine 1941, asparagine 1955, asparagine 2030, asparagine 2111, and asparagine 2140. In terms of domain architecture, IPT/TIG 2 spans 944-1000; the sequence is SLLIYIFGINFSGDPQALEIMVNKTNCKVIFSNQTNVICQTDLLPVGMHRLFMVVRP. IPT/TIG domains follow at residues 1018–1101, 1107–1186, and 1199–1274; these read PRLD…AFTY, PVIT…RSPG, and SIEP…WAGN. In terms of domain architecture, IPT/TIG 6 spans 1385 to 1464; that stretch reads PWIMAISPTH…LNVTVIVNGL (80 aa). The IPT/TIG 7 domain maps to 1573–1641; sequence HYFPKNFSIH…LVIEVDGLSY (69 aa). Residues 1928 to 2049 enclose the G8 1 domain; sequence HSWFPERVPQ…PEVTFTHLQA (122 aa). 5 PbH1 repeats span residues 2245–2267, 2288–2322, 2351–2373, 2383–2404, and 2405–2427; these read TLGLKVDSNIFYNILGHALLVGT, EQGNIIRNNVIISISGTEGLSSPEMLTPSGIYILN, APLLSFTQNIAHSCTRYGLFIYP, RGPTLFQNFTVWGSAGGARISR, and SSNLHLKNFQVYSCRDFGIDILE. An N-linked (GlcNAc...) asparagine glycan is attached at asparagine 2390. Residues asparagine 2431, asparagine 2467, asparagine 2531, asparagine 2549, asparagine 2579, asparagine 2591, asparagine 2749, asparagine 2764, asparagine 2972, and asparagine 3004 are each glycosylated (N-linked (GlcNAc...) asparagine). Residues 2460–2483 form a PbH1 6 repeat; the sequence is RWELIISNTTFVNFDLTDCVSIRT. Positions 2743 to 2869 constitute a G8 2 domain; the sequence is EGWGGHNHTI…PKKSWTRLAA (127 aa). Residues 3029–3051 form a PbH1 7 repeat; that stretch reads SHGIILNDNIVFGTVGHGIDLEG. N-linked (GlcNAc...) asparagine glycosylation is present at asparagine 3053. The stretch at 3082-3104 is one PbH1 8 repeat; that stretch reads AKDINLYGNVVAGSERIGFHIQG. Asparagine 3136, asparagine 3165, asparagine 3221, asparagine 3484, asparagine 3702, asparagine 3721, and asparagine 3833 each carry an N-linked (GlcNAc...) asparagine glycan. A PbH1 9 repeat occupies 3158–3183; the sequence is ENSVEIENITLVDNSIGLLATVYVSS. Residues 3854–3874 form a helical membrane-spanning segment; that stretch reads IILAVSLCSVASWLALCCLVC. A ciliary targeting sequence (CST) region spans residues 3871-3888; the sequence is CLVCCWFRKSKSRKIKSE. Disordered stretches follow at residues 3896–3919, 3943–3965, and 4031–4074; these read NDQKSHIHMSSKHPRSQETKKEDT, NGVSRRKVSRRAVREEGSSREED, and LQGQ…QEQL. 2 stretches are compositionally biased toward basic and acidic residues: residues 3910-3919 and 3954-3965; these read RSQETKKEDT and AVREEGSSREED. A nuclear localization signal (NLS) region spans residues 3947–3976; it reads RRKVSRRAVREEGSSREEDVVPAPRIISIT.

Interacts with CAMLG. Interacts with PKD2. Interacts (via CST) with ARF4; this interaction allows an efficient PKHD1 trafficking to the cilium. Interacts (via CST) with RAB8A; this interaction controls trafficking through the endomembrane systeme and to the cilium. Interacts (via CST) with TULP3; this interaction allows PKHD1 trafficking to the cilium. In terms of processing, palmitoylated. Palmitoylation facilitates the trafficking to the cilia and membrane targeting. Post-translationally, N-glycosylated. Several proteolytic cleavages occur within the extracellular domain, whereas at least one cleavage occurs within the cytoplasmic domain. Cleaved by a probable proprotein convertase which produces an extracellular domain (polyductin extracellular domain, (PECD)) and a C-terminal fragment (polyductin transmembrane fragment (PTM)) which are tethered together by disulfide bonds. This extracellular domain (PECD) is then shed from the primary cilium by activation of a member of the ADAM metalloproteinase disintegrins family, resulting in concomitant release of an intra-cellular C-terminal fragment (ICD) via a gamma-secretase-dependent process. The proteolytic cleavage of the C-terminal intracellular fragment (ICD) is controlled by cytosolic calcium concentration and activation of PKC.

The protein resides in the cell membrane. Its subcellular location is the cytoplasm. It localises to the apical cell membrane. It is found in the cytoskeleton. The protein localises to the cilium basal body. The protein resides in the cell projection. Its subcellular location is the cilium. It localises to the spindle. It is found in the chromosome. The protein localises to the centromere. The protein resides in the nucleus. Its subcellular location is the secreted. It localises to the extracellular exosome. It is found in the endoplasmic reticulum. The protein localises to the golgi apparatus. Functionally, promotes ciliogenesis in renal epithelial cells and therefore participates in the tubules formation and/ or ensures the maintenance of the architecture of the lumen of the kidney. Has an impact on cellular symmetry by ensuring correct bipolar cell division through the regulation of centrosome duplication and mitotic spindle assembly and by maintaining oriented cell division (OCD) during tubular elongation through planar cell polarity (PCP) pathway. During epithelial cell morphogenesis, it also regulates cell-cell and cell-matrix adhesion and participates in cell motility. Promotes cell-cell contact through the positive regulation of PTK2 kinase activity leading to either positive regulation of epithelial cell proliferation through the HRAS/RAF1 pathways, or negative regulation of apoptosis through the PDK1/AKT1 pathway. May act in collecting-duct and biliary differentiation. May participate in the regulation of the cholangiocytes proliferation and the CCN2 production in an CXCL8-dependent manner. The protein is Fibrocystin of Canis lupus familiaris (Dog).